The following is a 658-amino-acid chain: UvrABC system protein B (658 aa).

One can recognise a Helicase ATP-binding domain in the interval 26-414; that stretch reads AGLKKGLKHQ…PDVIEQIIRP (389 aa). 39–46 is a binding site for ATP; sequence GATGTGKT. The Beta-hairpin signature appears at 92–115; it reads YYDYYQPEAYVPQSDTYIEKDASI. A Helicase C-terminal domain is found at 430–592; sequence QIDDLMDEIN…ITPKTIKKEI (163 aa). Positions 622–658 constitute a UVR domain; that stretch reads DVFIEGMEHEMKEAAKALDFERAAELRDALLEIKAEG.

This sequence belongs to the UvrB family. As to quaternary structure, forms a heterotetramer with UvrA during the search for lesions. Interacts with UvrC in an incision complex.

Its subcellular location is the cytoplasm. In terms of biological role, the UvrABC repair system catalyzes the recognition and processing of DNA lesions. A damage recognition complex composed of 2 UvrA and 2 UvrB subunits scans DNA for abnormalities. Upon binding of the UvrA(2)B(2) complex to a putative damaged site, the DNA wraps around one UvrB monomer. DNA wrap is dependent on ATP binding by UvrB and probably causes local melting of the DNA helix, facilitating insertion of UvrB beta-hairpin between the DNA strands. Then UvrB probes one DNA strand for the presence of a lesion. If a lesion is found the UvrA subunits dissociate and the UvrB-DNA preincision complex is formed. This complex is subsequently bound by UvrC and the second UvrB is released. If no lesion is found, the DNA wraps around the other UvrB subunit that will check the other stand for damage. This Listeria monocytogenes serovar 1/2a (strain ATCC BAA-679 / EGD-e) protein is UvrABC system protein B.